The following is a 177-amino-acid chain: Thymidine kinase (177 aa).

11–18 contributes to the ATP binding site; that stretch reads GPMFSGKS. The active-site Proton acceptor is the Glu83. Phe113 serves as a coordination point for substrate. Zn(2+) contacts are provided by Cys138 and Cys141. 157–161 is a substrate binding site; the sequence is IELIG. Residues Cys170 and Cys173 each coordinate Zn(2+).

The protein belongs to the thymidine kinase family.

The enzyme catalyses thymidine + ATP = dTMP + ADP + H(+). This is Thymidine kinase (TK) from Sheeppox virus (strain KS-1) (SPPV).